The sequence spans 424 residues: Gamma-glutamyl phosphate reductase (424 aa).

The interval 1–27 (MSVEAQSRSGAVDTQEPADLREQVHSA) is disordered.

Belongs to the gamma-glutamyl phosphate reductase family.

The protein localises to the cytoplasm. It catalyses the reaction L-glutamate 5-semialdehyde + phosphate + NADP(+) = L-glutamyl 5-phosphate + NADPH + H(+). Its pathway is amino-acid biosynthesis; L-proline biosynthesis; L-glutamate 5-semialdehyde from L-glutamate: step 2/2. Its function is as follows. Catalyzes the NADPH-dependent reduction of L-glutamate 5-phosphate into L-glutamate 5-semialdehyde and phosphate. The product spontaneously undergoes cyclization to form 1-pyrroline-5-carboxylate. This Mycolicibacterium smegmatis (strain ATCC 700084 / mc(2)155) (Mycobacterium smegmatis) protein is Gamma-glutamyl phosphate reductase.